The sequence spans 949 residues: Protocadherin alpha-11 (949 aa).

Positions 1-29 (MFGFQRRGLGTPRLQLWLLLLEFWEVGSG) are cleaved as a signal peptide. 6 Cadherin domains span residues 30-133 (QLHY…PPVF), 157-242 (ASDA…DPDF), 243-349 (DKSE…SPEV), 350-454 (AVTS…APAF), 455-564 (AQPE…APAL), and 580-677 (VPRS…APKA). Over 30–696 (QLHYSVSEEA…SPEAALVDVN (667 aa)) the chain is Extracellular. N-linked (GlcNAc...) asparagine glycosylation is found at N265 and N304. An N-linked (GlcNAc...) asparagine glycan is attached at N547. Residues 697–717 (VYLIIAICVVSSLLVLTLLLY) traverse the membrane as a helical segment. The Cytoplasmic segment spans residues 718–949 (TALWCSATPT…GNSTTDNSDQ (232 aa)). 2 PXXP repeats span residues 733-736 (PGKP) and 773-776 (PSLP). The interval 733 to 893 (PGKPTLVCSR…PDKFIIPGSP (161 aa)) is 6 X 4 AA repeats of P-X-X-P. Disordered regions lie at residues 753–807 (RRQR…DWRY), 826–858 (ILRA…PPVG), and 870–889 (YGPG…KFII). The segment covering 780–789 (NKEEEGERQE) has biased composition (basic and acidic residues). 4 PXXP repeats span residues 795-798 (PGQP), 831-834 (PGGP), 872-875 (PGNP), and 890-893 (PGSP). Residues 900-949 (QEPANSQIDKSDFITFGKKEETKKKKKKKKGNKTQEKKEKGNSTTDNSDQ) form a disordered region. The segment covering 908–922 (DKSDFITFGKKEETK) has biased composition (basic and acidic residues).

The protein resides in the cell membrane. Functionally, potential calcium-dependent cell-adhesion protein. May be involved in the establishment and maintenance of specific neuronal connections in the brain. In Pan troglodytes (Chimpanzee), this protein is Protocadherin alpha-11 (PCDHA11).